Here is a 57-residue protein sequence, read N- to C-terminus: Myrmicitoxin(1)-Pm7a (57 aa).

Residues Met-1–Ala-23 form the signal peptide. Residues Glu-24–Ala-31 constitute a propeptide that is removed on maturation.

This sequence belongs to the formicidae venom clade 4 family. In terms of tissue distribution, expressed by the venom gland.

It is found in the secreted. Its function is as follows. Probable neurotoxin. The chain is Myrmicitoxin(1)-Pm7a from Pogonomyrmex maricopa (Maricopa harvester ant).